The primary structure comprises 49 residues: Peridinin-chlorophyll a-binding protein (49 aa).

In terms of assembly, monomer. Binds 12 peridinin and 2 chlorophyll a molecules per monomer.

The protein resides in the plastid. It is found in the chloroplast. Water-soluble antenna for capture of solar energy in the blue-green range. Peridinin is an asymmetric carotenoid. The sequence is that of Peridinin-chlorophyll a-binding protein from Alexandrium cohorticula (Dinoflagellate).